Here is a 359-residue protein sequence, read N- to C-terminus: Nicotinate-nucleotide--dimethylbenzimidazole phosphoribosyltransferase (359 aa).

Glu318 (proton acceptor) is an active-site residue.

The protein belongs to the CobT family. In terms of assembly, homodimer.

It catalyses the reaction 5,6-dimethylbenzimidazole + nicotinate beta-D-ribonucleotide = alpha-ribazole 5'-phosphate + nicotinate + H(+). The protein operates within nucleoside biosynthesis; alpha-ribazole biosynthesis; alpha-ribazole from 5,6-dimethylbenzimidazole: step 1/2. Catalyzes the synthesis of alpha-ribazole-5'-phosphate from nicotinate mononucleotide (NAMN) and 5,6-dimethylbenzimidazole (DMB). This Escherichia coli O9:H4 (strain HS) protein is Nicotinate-nucleotide--dimethylbenzimidazole phosphoribosyltransferase.